Consider the following 292-residue polypeptide: uncharacterized protein (292 aa).

Helical transmembrane passes span 17-37 (LFYT…FPAL), 135-155 (LIAV…IGQL), 166-186 (TTLW…YDIV), and 216-236 (FHGV…TALY). The interval 267-292 (EKSEDKKSIVTSRIEEENEDEISDYE) is disordered. A compositionally biased stretch (acidic residues) spans 282–292 (EENEDEISDYE).

It localises to the membrane. This is an uncharacterized protein from Caenorhabditis elegans.